A 428-amino-acid chain; its full sequence is Elongation factor 1-alpha (428 aa).

The tr-type G domain occupies 5 to 215; sequence KPHVNIVFIG…ALDQIPEPPK (211 aa). Positions 14–21 are G1; sequence GHVDHGKS. 14–21 contacts GTP; that stretch reads GHVDHGKS. Mg(2+) is bound at residue Ser-21. The interval 68–72 is G2; it reads GITID. The tract at residues 89-92 is G3; it reads DAPG. GTP contacts are provided by residues 89–93 and 144–147; these read DAPGH and NKMD. Positions 144 to 147 are G4; the sequence is NKMD. The G5 stretch occupies residues 181-183; sequence SAW.

This sequence belongs to the TRAFAC class translation factor GTPase superfamily. Classic translation factor GTPase family. EF-Tu/EF-1A subfamily.

The protein resides in the cytoplasm. The enzyme catalyses GTP + H2O = GDP + phosphate + H(+). In terms of biological role, GTP hydrolase that promotes the GTP-dependent binding of aminoacyl-tRNA to the A-site of ribosomes during protein biosynthesis. This chain is Elongation factor 1-alpha, found in Thermococcus gammatolerans (strain DSM 15229 / JCM 11827 / EJ3).